We begin with the raw amino-acid sequence, 513 residues long: Gluconokinase (513 aa).

ATP-binding positions include Lys-16, Thr-261, Gly-300, and 412–416; that span reads GFARS.

It belongs to the FGGY kinase family.

It catalyses the reaction D-gluconate + ATP = 6-phospho-D-gluconate + ADP + H(+). Its pathway is carbohydrate acid metabolism; D-gluconate degradation. Catabolite repression by gluconate. This Bacillus subtilis (strain 168) protein is Gluconokinase (gntK).